We begin with the raw amino-acid sequence, 153 residues long: 6,7-dimethyl-8-ribityllumazine synthase (153 aa).

5-amino-6-(D-ribitylamino)uracil contacts are provided by residues Phe-22, 56-58 (AFE), and 80-82 (AVI). 85 to 86 (ST) contributes to the (2S)-2-hydroxy-3-oxobutyl phosphate binding site. Catalysis depends on His-88, which acts as the Proton donor. Phe-113 serves as a coordination point for 5-amino-6-(D-ribitylamino)uracil. Arg-127 lines the (2S)-2-hydroxy-3-oxobutyl phosphate pocket.

The protein belongs to the DMRL synthase family.

The catalysed reaction is (2S)-2-hydroxy-3-oxobutyl phosphate + 5-amino-6-(D-ribitylamino)uracil = 6,7-dimethyl-8-(1-D-ribityl)lumazine + phosphate + 2 H2O + H(+). The protein operates within cofactor biosynthesis; riboflavin biosynthesis; riboflavin from 2-hydroxy-3-oxobutyl phosphate and 5-amino-6-(D-ribitylamino)uracil: step 1/2. Functionally, catalyzes the formation of 6,7-dimethyl-8-ribityllumazine by condensation of 5-amino-6-(D-ribitylamino)uracil with 3,4-dihydroxy-2-butanone 4-phosphate. This is the penultimate step in the biosynthesis of riboflavin. The sequence is that of 6,7-dimethyl-8-ribityllumazine synthase from Clostridium botulinum (strain Alaska E43 / Type E3).